Here is a 243-residue protein sequence, read N- to C-terminus: Proteasome subunit alpha (243 aa).

This sequence belongs to the peptidase T1A family. The 20S proteasome core is composed of 14 alpha and 14 beta subunits that assemble into four stacked heptameric rings, resulting in a barrel-shaped structure. The two inner rings, each composed of seven catalytic beta subunits, are sandwiched by two outer rings, each composed of seven alpha subunits. The catalytic chamber with the active sites is on the inside of the barrel. Has a gated structure, the ends of the cylinder being occluded by the N-termini of the alpha-subunits. Is capped at one or both ends by the proteasome regulatory ATPase, PAN.

It is found in the cytoplasm. The formation of the proteasomal ATPase PAN-20S proteasome complex, via the docking of the C-termini of PAN into the intersubunit pockets in the alpha-rings, triggers opening of the gate for substrate entry. Interconversion between the open-gate and close-gate conformations leads to a dynamic regulation of the 20S proteasome proteolysis activity. Its function is as follows. Component of the proteasome core, a large protease complex with broad specificity involved in protein degradation. This Pyrobaculum aerophilum (strain ATCC 51768 / DSM 7523 / JCM 9630 / CIP 104966 / NBRC 100827 / IM2) protein is Proteasome subunit alpha.